Here is a 166-residue protein sequence, read N- to C-terminus: Urease accessory protein UreE (166 aa).

This sequence belongs to the UreE family.

Its subcellular location is the cytoplasm. Involved in urease metallocenter assembly. Binds nickel. Probably functions as a nickel donor during metallocenter assembly. This is Urease accessory protein UreE from Azotobacter vinelandii (strain DJ / ATCC BAA-1303).